The following is a 129-amino-acid chain: Snaclec coagulation factor IX-binding protein subunit A (129 aa).

In terms of domain architecture, C-type lectin spans 1–129 (DCPSGWSSYE…GQQNPFVCEA (129 aa)). Disulfide bonds link C2–C13, C30–C127, and C102–C119. Residues S41, E43, and E47 each coordinate Ca(2+). Ca(2+) is bound at residue E128.

The protein belongs to the snaclec family. As to quaternary structure, heterodimer of subunits A and B; disulfide-linked. Expressed by the venom gland.

It is found in the secreted. Functionally, anticoagulant protein which binds to the gamma-carboxyglutamic acid-domain regions of factor IX (F9) (but not factor X) in the presence of calcium with a 1 to 1 stoichiometry. This Protobothrops flavoviridis (Habu) protein is Snaclec coagulation factor IX-binding protein subunit A.